Here is a 1502-residue protein sequence, read N- to C-terminus: G patch domain-containing protein 8 (1502 aa).

The G-patch domain maps to 40-86 (SDNIGHRLLQKHGWKLGQGLGKSLQGRTDPIPIVVKYDVMGMGRMEM). A coiled-coil region spans residues 89 to 124 (DYAEDATERRRVLEVEKEDTEELRQKYKDYVDKEKA). A C2H2-type zinc finger spans residues 136-160 (FYCELCDKQYQKHQEFDNHINSYDH). Positions 172–251 (REFARNVSSR…GATASCGLGS (80 aa)) are disordered. Positions 182-206 (SRKDEKKQEKALRRLHELAEQRKQA) are enriched in basic and acidic residues. Acidic residues predominate over residues 223–233 (VDEEGGEDDKD). Residue Lys-311 forms a Glycyl lysine isopeptide (Lys-Gly) (interchain with G-Cter in SUMO2) linkage. Composition is skewed to basic and acidic residues over residues 323 to 339 (AEEGTSEDGTKPDEKSS) and 424 to 436 (NTTHPKNAPESKK). Disordered stretches follow at residues 323–391 (AEEG…ATEP) and 419–541 (QMDG…FPVL). A compositionally biased stretch (polar residues) spans 459-472 (SEVSEQPKETSMTE). Lys-479 is modified (N6-acetyllysine). Ser-491 is modified (phosphoserine). Polar residues predominate over residues 491-519 (SDQSLESHSQKVSETQMCESNSSKETSLA). A Glycyl lysine isopeptide (Lys-Gly) (interchain with G-Cter in SUMO2) cross-link involves residue Lys-577. Basic and acidic residues-rich tracts occupy residues 579–623 (SRNK…EKIV) and 653–670 (SETEDTGRSLPSKKERSG). The segment at 579 to 1301 (SRNKDARTKG…ESTDGAEDAS (723 aa)) is disordered. The residue at position 653 (Ser-653) is a Phosphoserine. Residues 671 to 692 (KSHRHKKKKKHKKSSKHKRKHK) are compositionally biased toward basic residues. Residues 693-707 (ADTEEKSSKAESGEK) show a composition bias toward basic and acidic residues. Positions 708–720 (SKKRKKRKRKKNK) are enriched in basic residues. Positions 733–743 (PEPPGSGSPAP) are enriched in pro residues. A phosphoserine mark is found at Ser-738, Ser-740, and Ser-758. A compositionally biased stretch (basic and acidic residues) spans 750–772 (AQDDSQRRSLPAEEGSSGKKDEG). Composition is skewed to basic residues over residues 799-809 (AGTKRSSRSSH) and 852-867 (SRSRSGRRHSSHRSSR). Low complexity predominate over residues 868–896 (RSYSSSSDASSDQSCYSRQRSYSDDSYSD). Phosphoserine occurs at positions 911 and 914. Residues 919-928 (SKHRSKRHKY) are compositionally biased toward basic residues. Phosphoserine is present on residues Ser-981, Ser-1009, Ser-1014, Ser-1033, and Ser-1035. The span at 1010–1027 (WGHESPEERHSGRRDFIR) shows a compositional bias: basic and acidic residues. Over residues 1042–1059 (GRGEGPGKKDDGRGDDSK) the composition is skewed to basic and acidic residues. Ser-1081 is subject to Phosphoserine. Composition is skewed to basic and acidic residues over residues 1093–1108 (LLEKIQSRKVERKPSV) and 1159–1171 (KKCEESGLERGEE). Lys-1105 participates in a covalent cross-link: Glycyl lysine isopeptide (Lys-Gly) (interchain with G-Cter in SUMO2). Ser-1107 bears the Phosphoserine mark. The residue at position 1175 (Ser-1175) is a Phosphoserine.

The chain is G patch domain-containing protein 8 (GPATCH8) from Homo sapiens (Human).